The primary structure comprises 336 residues: Fimbrial adhesin PapGII (336 aa).

The N-terminal stretch at 1–20 (MKKWFPALLFSLCVSGESSA) is a signal peptide. Cystine bridges form between cysteine 64–cysteine 138 and cysteine 217–cysteine 249. D-galactose is bound by residues glutamate 79 and 124 to 127 (GYKW).

Belongs to the adhesin PapG family.

It is found in the secreted. Its subcellular location is the fimbrium. Tip adhesin component of type P pili that plays a critical role in kidney infection through targeted interaction with the globoseries glycolipids containing the Gal-alpha(1-4)-Gal disaccharide present on uroepithelial cells. In turn, transcriptionally regulates host gene expression in kidney cells, leading to inflammatory pathway activation and renal tissue damage. Acts thereby as key determinant of invasive uropathogenic E.coli (UPEC), which cause pyelonephritis and urinary-source bacteremia. This is Fimbrial adhesin PapGII from Escherichia coli O6:H1 (strain CFT073 / ATCC 700928 / UPEC).